The primary structure comprises 225 residues: Helicostatins (225 aa).

Residues 1–18 form the signal peptide; sequence MLYSSLPVCFLVLGAALC. Residues 19 to 48 constitute a propeptide that is removed on maturation; sequence APERMQNEAEPHDLQPHEAEPHSDHVAPLA. A leucine amide mark is found at Leu58, Leu79, and Leu90. A propeptide spanning residues 94–127 is cleaved from the precursor; the sequence is SVDEDQSNDEQQLTTSDLDQAALAELFDQYDDAE. Leu137 is subject to Leucine amide. A propeptide spanning residues 141–149 is cleaved from the precursor; sequence FADDETSEE. Leucine amide occurs at positions 159, 170, 181, 192, and 206. The tract at residues 205–225 is disordered; it reads GLGKRSGDDVSADDSDNYFDV. Positions 210 to 225 are excised as a propeptide; the sequence is SGDDVSADDSDNYFDV. Over residues 214 to 225 the composition is skewed to acidic residues; it reads VSADDSDNYFDV.

Belongs to the allatostatin family. Highly expressed in the CNS and gut of larvae. Also expressed in the cells of the larval brain and ventral nerve cord and in endocrine cells of the midgut.

It is found in the secreted. In terms of biological role, may act as a neurotransmitter or neuromodulator. This chain is Helicostatins, found in Helicoverpa armigera (Cotton bollworm).